Reading from the N-terminus, the 215-residue chain is MIYLNNVILNDKTLPMCFNLSVNAGERVAIIGESGAGKSTLLNLIAGFEFPAQGEIWLNDKNHTRSAPYERPVSMLFQENNLFPHLTVQQNLALGIKPSLKLTALEQEKIEQVACSVGLGDYLERLPNSLSGGQKQRVALARCLLRDKPILLLDEPFSALDQKLRVEMLALIAKLCDEKDLTLLLVTHQPSELIGSIDQVLVVENGQISQLQKGV.

The ABC transporter domain occupies 2–215 (IYLNNVILND…GQISQLQKGV (214 aa)). 32–39 (GESGAGKS) lines the ATP pocket.

It belongs to the ABC transporter superfamily. Thiamine importer (TC 3.A.1.19.1) family. The complex is composed of two ATP-binding proteins (ThiQ), two transmembrane proteins (ThiP) and a solute-binding protein (ThiB).

It is found in the cell inner membrane. It carries out the reaction thiamine(out) + ATP + H2O = thiamine(in) + ADP + phosphate + H(+). Its function is as follows. Part of the ABC transporter complex ThiBPQ involved in thiamine import. Responsible for energy coupling to the transport system. The sequence is that of Thiamine import ATP-binding protein ThiQ from Haemophilus influenzae (strain ATCC 51907 / DSM 11121 / KW20 / Rd).